Here is a 275-residue protein sequence, read N- to C-terminus: Large ribosomal subunit protein uL2cz/uL2cy (275 aa).

Disordered stretches follow at residues 1–26 (MAIHLYKTSTPSTRNGTVDSRQVKSN) and 224–275 (MNPV…RRTK). The segment covering 7–26 (KTSTPSTRNGTVDSRQVKSN) has biased composition (polar residues).

The protein belongs to the universal ribosomal protein uL2 family. In terms of assembly, part of the 50S ribosomal subunit.

The protein resides in the plastid. The protein localises to the chloroplast. This Phaseolus angularis (Azuki bean) protein is Large ribosomal subunit protein uL2cz/uL2cy (rpl2-A).